A 271-amino-acid polypeptide reads, in one-letter code: Aquaporin-2 (271 aa).

Residues 1–11 are Cytoplasmic-facing; the sequence is MWELRSIAFSR. The helical transmembrane segment at 12-32 threads the bilayer; it reads AVLAEFLATLLFVFFGLGSAL. Residues 33 to 40 lie on the Extracellular side of the membrane; the sequence is NWPQALPS. The chain crosses the membrane as a helical span at residues 41-59; sequence VLQIAMAFGLAIGTLVQAL. Residues 60-64 lie on the Cytoplasmic side of the membrane; that stretch reads GHVSG. The segment at residues 65 to 74 is an intramembrane region (discontinuously helical); it reads AHINPAVTVA. The NPA 1 signature appears at 68–70; it reads NPA. Residues 75 to 85 are Cytoplasmic-facing; the sequence is CLVGCHVSFLR. The chain crosses the membrane as a helical span at residues 86-107; the sequence is AVFYVAAQLLGAVAGAALLHEI. Residues 108-127 are Extracellular-facing; the sequence is TPPAIRGDLAVNALNNNSTA. 2 N-linked (GlcNAc...) asparagine glycosylation sites follow: Asn-123 and Asn-124. The helical transmembrane segment at 128-148 threads the bilayer; sequence GQAVTVELFLTLQLVLCIFPS. Residues 149–156 are Cytoplasmic-facing; that stretch reads TDKRRGKQ. The helical transmembrane segment at 157–176 threads the bilayer; that stretch reads LGHPALSIGFSVALGHLLGI. Over 177–180 the chain is Extracellular; it reads HYTG. The segment at residues 181–193 is an intramembrane region (discontinuously helical); sequence CSMNPARSLAPAI. An NPA 2 motif is present at residues 184–186; sequence NPA. At 194–201 the chain is on the extracellular side; the sequence is VTGKFDDH. Residues 202–222 traverse the membrane as a helical segment; sequence WVFWIGPLVGAIVASLLYNYV. Residues 223-271 are Cytoplasmic-facing; the sequence is LFPPAKSLSERLAVLKGLEPDTDWEEREVRRRQSVELHSPQSLPRGTKA. Residues 249-271 form a disordered region; sequence REVRRRQSVELHSPQSLPRGTKA. Ser-256 carries the post-translational modification Phosphoserine. The segment covering 261–271 has biased composition (polar residues); the sequence is SPQSLPRGTKA.

The protein belongs to the MIP/aquaporin (TC 1.A.8) family. In terms of assembly, homotetramer. In terms of processing, ser-256 phosphorylation is necessary and sufficient for expression at the apical membrane. Endocytosis is not phosphorylation-dependent. N-glycosylated. As to expression, expressed in renal collecting tubules.

The protein localises to the apical cell membrane. It is found in the basolateral cell membrane. The protein resides in the cell membrane. Its subcellular location is the cytoplasmic vesicle membrane. It localises to the golgi apparatus. The protein localises to the trans-Golgi network membrane. The enzyme catalyses H2O(in) = H2O(out). It carries out the reaction glycerol(in) = glycerol(out). In terms of biological role, forms a water-specific channel that provides the plasma membranes of renal collecting duct with high permeability to water, thereby permitting water to move in the direction of an osmotic gradient. Could also be permeable to glycerol. The chain is Aquaporin-2 from Ovis aries (Sheep).